The following is a 1133-amino-acid chain: uncharacterized protein (1133 aa).

Disordered regions lie at residues 33–83 (QFED…NSSS), 305–629 (PVSN…NSNS), 679–723 (GKLD…SVKR), and 736–817 (IESP…SEEV). The segment covering 39 to 83 (NNNNSNNNNNNNNSNNNNSNNNENINRKTGSTLLSSSTSQLNSSS) has biased composition (low complexity). A DNA-binding region (NDT80) is located at residues 40 to 308 (NNNSNNNNNN…GHPTCNPVSN (269 aa)). A compositionally biased stretch (polar residues) spans 305–316 (PVSNNPSTPGTP). The span at 317–384 (ISNFDSSNNN…NNNSSGNSSS (68 aa)) shows a compositional bias: low complexity. Residues 401–417 (INSLSNHNSPHLTPIQY) are compositionally biased toward polar residues. Residues 418 to 452 (NNNNNNSNNNSNNNNNNNNNNNNSNNNNNNSNNNN) show a composition bias toward low complexity. Residues 453–470 (HQFQSNNRIFKGNLSNPF) are compositionally biased toward polar residues. Low complexity-rich tracts occupy residues 473–615 (NYSQ…GNNS) and 686–714 (NNSNNNSSNNNNSNNNSSNNNSNNNNNNN). Over residues 736–747 (IESPQSYISSPT) the composition is skewed to polar residues. Residues 757–771 (QPQPQPQPQPQPQPQ) are compositionally biased toward pro residues. Positions 772 to 808 (PQSQSQSQSQSQSQSQSQSQSQSQPIQQIVQQQLSSP) are enriched in low complexity. Residues 909 to 1020 (SDKRVKENVK…KKVDNVCMEL (112 aa)) enclose the Peptidase S74 domain. The chain crosses the membrane as a helical span at residues 1055–1075 (IFIGIGVFTLFVIFGLVAVSI). The interval 1107–1133 (SGSNSCYDSSSNSAIDTTTSTGSGSIK) is disordered.

The protein resides in the membrane. This is an uncharacterized protein from Dictyostelium discoideum (Social amoeba).